The primary structure comprises 285 residues: Elongation factor Ts (285 aa).

Residues 75–78 (TDFV) form an involved in Mg(2+) ion dislocation from EF-Tu region.

Belongs to the EF-Ts family.

The protein resides in the cytoplasm. Its function is as follows. Associates with the EF-Tu.GDP complex and induces the exchange of GDP to GTP. It remains bound to the aminoacyl-tRNA.EF-Tu.GTP complex up to the GTP hydrolysis stage on the ribosome. In Alcanivorax borkumensis (strain ATCC 700651 / DSM 11573 / NCIMB 13689 / SK2), this protein is Elongation factor Ts.